Reading from the N-terminus, the 399-residue chain is Nicotinate phosphoribosyltransferase (399 aa).

Phosphohistidine; by autocatalysis is present on His217.

The protein belongs to the NAPRTase family. Transiently phosphorylated on a His residue during the reaction cycle. Phosphorylation strongly increases the affinity for substrates and increases the rate of nicotinate D-ribonucleotide production. Dephosphorylation regenerates the low-affinity form of the enzyme, leading to product release.

It catalyses the reaction nicotinate + 5-phospho-alpha-D-ribose 1-diphosphate + ATP + H2O = nicotinate beta-D-ribonucleotide + ADP + phosphate + diphosphate. It participates in cofactor biosynthesis; NAD(+) biosynthesis; nicotinate D-ribonucleotide from nicotinate: step 1/1. Functionally, catalyzes the synthesis of beta-nicotinate D-ribonucleotide from nicotinate and 5-phospho-D-ribose 1-phosphate at the expense of ATP. This is Nicotinate phosphoribosyltransferase from Burkholderia cenocepacia (strain HI2424).